The primary structure comprises 239 residues: Small ribosomal subunit protein uS3 (239 aa).

A KH type-2 domain is found at 39 to 109; the sequence is IRAMIQEIPE…KVQIKIKEVK (71 aa). The segment at 219–239 is disordered; that stretch reads GALLKKQRRPRTEKPAQAGRQ.

Belongs to the universal ribosomal protein uS3 family. In terms of assembly, part of the 30S ribosomal subunit. Forms a tight complex with proteins S10 and S14.

Its function is as follows. Binds the lower part of the 30S subunit head. Binds mRNA in the 70S ribosome, positioning it for translation. This Treponema denticola (strain ATCC 35405 / DSM 14222 / CIP 103919 / JCM 8153 / KCTC 15104) protein is Small ribosomal subunit protein uS3.